Consider the following 445-residue polypeptide: Argininosuccinate lyase (445 aa).

This sequence belongs to the lyase 1 family. Argininosuccinate lyase subfamily.

It localises to the cytoplasm. The catalysed reaction is 2-(N(omega)-L-arginino)succinate = fumarate + L-arginine. It functions in the pathway amino-acid biosynthesis; L-arginine biosynthesis; L-arginine from L-ornithine and carbamoyl phosphate: step 3/3. This Xylella fastidiosa (strain Temecula1 / ATCC 700964) protein is Argininosuccinate lyase.